The chain runs to 872 residues: Alanine--tRNA ligase (872 aa).

Residues His-571, His-575, Cys-674, and His-678 each coordinate Zn(2+).

This sequence belongs to the class-II aminoacyl-tRNA synthetase family. Zn(2+) serves as cofactor.

The protein localises to the cytoplasm. The catalysed reaction is tRNA(Ala) + L-alanine + ATP = L-alanyl-tRNA(Ala) + AMP + diphosphate. In terms of biological role, catalyzes the attachment of alanine to tRNA(Ala) in a two-step reaction: alanine is first activated by ATP to form Ala-AMP and then transferred to the acceptor end of tRNA(Ala). Also edits incorrectly charged Ser-tRNA(Ala) and Gly-tRNA(Ala) via its editing domain. This is Alanine--tRNA ligase from Symbiobacterium thermophilum (strain DSM 24528 / JCM 14929 / IAM 14863 / T).